Here is an 86-residue protein sequence, read N- to C-terminus: Exodeoxyribonuclease 7 small subunit (86 aa).

It belongs to the XseB family. In terms of assembly, heterooligomer composed of large and small subunits.

The protein localises to the cytoplasm. The enzyme catalyses Exonucleolytic cleavage in either 5'- to 3'- or 3'- to 5'-direction to yield nucleoside 5'-phosphates.. In terms of biological role, bidirectionally degrades single-stranded DNA into large acid-insoluble oligonucleotides, which are then degraded further into small acid-soluble oligonucleotides. This Xanthomonas axonopodis pv. citri (strain 306) protein is Exodeoxyribonuclease 7 small subunit.